The sequence spans 840 residues: DNA mismatch repair protein MutS (840 aa).

Position 601-608 (601-608 (GPNMSGKS)) interacts with ATP.

The protein belongs to the DNA mismatch repair MutS family.

In terms of biological role, this protein is involved in the repair of mismatches in DNA. It is possible that it carries out the mismatch recognition step. This protein has a weak ATPase activity. The chain is DNA mismatch repair protein MutS from Lactococcus lactis subsp. cremoris (strain SK11).